The primary structure comprises 501 residues: Probable malate:quinone oxidoreductase (501 aa).

This sequence belongs to the MQO family. FAD serves as cofactor.

It carries out the reaction (S)-malate + a quinone = a quinol + oxaloacetate. It functions in the pathway carbohydrate metabolism; tricarboxylic acid cycle; oxaloacetate from (S)-malate (quinone route): step 1/1. This is Probable malate:quinone oxidoreductase from Geobacillus kaustophilus (strain HTA426).